A 251-amino-acid polypeptide reads, in one-letter code: Maleate isomerase (251 aa).

Substrate-binding positions include Asn-14, 76–78, Tyr-133, and Asn-163; that span reads CLV. Cys-76 serves as the catalytic Nucleophile. Cys-76 is subject to S-(2-succinyl)cysteine. Cys-194 serves as the catalytic Proton donor. 195-196 provides a ligand contact to substrate; sequence VQ.

It belongs to the maleate isomerase family. Homodimer.

It carries out the reaction maleate = fumarate. Catalyzes cis-trans isomerization of the C2-C3 double bond in maleate to yield fumarate. Shows a strict specificity for maleate, with no activity detected toward structurally related substrates including citraconate, mesaconate, dimethylmaleate, and maleamide. This is Maleate isomerase from Nocardia farcinica (strain IFM 10152).